The sequence spans 160 residues: Serine-protein kinase RsbW (160 aa).

The protein belongs to the anti-sigma-factor family.

The enzyme catalyses L-seryl-[protein] + ATP = O-phospho-L-seryl-[protein] + ADP + H(+). It catalyses the reaction L-threonyl-[protein] + ATP = O-phospho-L-threonyl-[protein] + ADP + H(+). Negative regulator of sigma-B activity. Phosphorylates and inactivates its specific antagonist protein, RsbV. Upon phosphorylation of RsbV, RsbW is released and binds to sigma-B, thereby blocking its ability to form an RNA polymerase holoenzyme (E-sigma-B). The polypeptide is Serine-protein kinase RsbW (Bacillus cereus (strain B4264)).